The chain runs to 952 residues: Inner tegument protein (952 aa).

The interval W490–N952 is interaction with large tegument protein.

The protein belongs to the herpesviridae inner tegument protein family. In terms of assembly, interacts (via C-terminus) with the large tegument protein/LTP (via N-terminus).

The protein resides in the virion tegument. It localises to the host cytoplasm. It is found in the host nucleus. The protein localises to the host Golgi apparatus. Its subcellular location is the host trans-Golgi network. Plays an essential role in cytoplasmic secondary envelopment during viral egress. Interacts with the capsid via the large tegument protein/LTP and participates in its transport to the host trans-Golgi network (TGN) where secondary envelopment occurs. Modulates tegumentation and capsid accumulation at the viral assembly complex. This is Inner tegument protein (63) from Connochaetes taurinus (Blue wildebeest).